The primary structure comprises 612 residues: MRRIYAAWTLVAAAGVMDCSPRLEKAAAFTLGPDSQVIVFPFMFQGYNIVVLPTTKYGDLKGNARRRVASFLEHNISHAVWYFVVGGIAYKDDRSERLFSEMMDGYLKKISAGASKVYKGGRKMFSESLETVHEMIFECNKAGDGHVVKYGKSIINRLSDMIENAPTGISAEEKREYRRFWSRVKERAGFLYSTERLRRVVEVEKIVCNACKEICLKLKEEELMGLLAEGKMKKDLKATVDEDEIGHCLYLEYTVVNTSLLLDAHREHGGDVTRELVKQMLLGKKGDEIDRRYINKVANVVKERQRREMEKKEEEKKKEEEKKKEEEKRKEEKKKKKEEKKEEKKKKKEEKKEEKKEEKKEEKKEEKKEEKKEEKKEEKSGKSLREGEASEEAEMPSVEVGGARRKTGKKSEGGRKRYKIHRRVSRWRKSPEKIKEEWDKGSEEKWRGRSLEEIKEQKVFHDIMGVLELLRSEDADKFFIDTGDYTKGGSERQRMVAIGVLESGGKRMAGVVEVGTFKDSSSGCPVVYHLMFRVTGIEGMGDVMSPEFAEANDIEKIDKNREYQDEGMFVYPRGVRFETVKETDAFQIVWGNPSNTSKVLRRLTIQRRPYVI.

Residues 304 to 330 (RQRREMEKKEEEKKKEEEKKKEEEKRK) show a composition bias toward basic and acidic residues. Residues 304–424 (RQRREMEKKE…RKRYKIHRRV (121 aa)) form a disordered region. A compositionally biased stretch (basic residues) spans 331 to 349 (EEKKKKKEEKKEEKKKKKE). Basic and acidic residues predominate over residues 350–388 (EKKEEKKEEKKEEKKEEKKEEKKEEKKEEKSGKSLREGE).

Belongs to the UPF0329 family.

The chain is UPF0329 protein ECU05_1680/ECU11_0050 from Encephalitozoon cuniculi (strain GB-M1) (Microsporidian parasite).